Consider the following 236-residue polypeptide: uncharacterized protein (236 aa).

Positions 1 to 12 (MKLLGHRKSHGH) are enriched in basic residues. The tract at residues 1–108 (MKLLGHRKSH…KAANRARMTE (108 aa)) is disordered. Residues 13–31 (QRADASPDAGSKDGCRPDS) show a composition bias toward basic and acidic residues. Residues 32-47 (GRTSGSDTSRGSQTTG) show a composition bias toward low complexity. Over residues 52-65 (PTPKRNQSRRHTKK) the composition is skewed to basic residues. A compositionally biased stretch (low complexity) spans 67-78 (PVAPAPMTAAQA). Over residues 90 to 108 (LSREERRAEKAANRARMTE) the composition is skewed to basic and acidic residues. Helical transmembrane passes span 142–162 (NLLG…FAVP) and 166–186 (FYLS…AIIL).

It localises to the cell membrane. This is an uncharacterized protein from Mycobacterium tuberculosis (strain CDC 1551 / Oshkosh).